A 640-amino-acid polypeptide reads, in one-letter code: DNA mismatch repair protein MutL (640 aa).

Residues 343–389 (TKNTATDQRAENLEVKPDSKEKELQPKESQHPRLVACDLPSGKIMPP) are disordered. A compositionally biased stretch (basic and acidic residues) spans 350–373 (QRAENLEVKPDSKEKELQPKESQH).

It belongs to the DNA mismatch repair MutL/HexB family.

This protein is involved in the repair of mismatches in DNA. It is required for dam-dependent methyl-directed DNA mismatch repair. May act as a 'molecular matchmaker', a protein that promotes the formation of a stable complex between two or more DNA-binding proteins in an ATP-dependent manner without itself being part of a final effector complex. In Desulforamulus reducens (strain ATCC BAA-1160 / DSM 100696 / MI-1) (Desulfotomaculum reducens), this protein is DNA mismatch repair protein MutL.